The sequence spans 339 residues: MIKQVCKNITICSLALSTALTVFPASSYAEIKSKITTVSEKNLDGDTKMYTRTATTSDTEKKISQSLQFNFLTEPNYDKETVFIKAKGTIGSGLKILNPNGYWNSTLRWPGSYSVSIQNVDDNNNSTNVTDFAPKNQDESREVKYTYGYKTGGDFSINRGGLTGNITKEKNYSETISYQQPSYRTLIDQPTTNKGVAWKVEAHSINNMGHDHTRQLTNDSDDRVKSEIFSLTRNGNLWAKDNFTPKNKMPVTVSEGFNPEFLAVMSHDKNDKGKSRFIVHYKRSMDDFKLDWNKHGFWGYWSGENHVDQKEEKLSALYEVDWKTHDVKLIKTINDKEQK.

A signal peptide spans 1–29; sequence MIKQVCKNITICSLALSTALTVFPASSYA.

Belongs to the aerolysin family.

This is an uncharacterized protein from Staphylococcus aureus (strain MRSA252).